Consider the following 178-residue polypeptide: CASP-like protein 5A1 (178 aa).

Over residues 1–11 (MFASRPAVHPV) the composition is skewed to low complexity. Positions 1–25 (MFASRPAVHPVEAPPPPDPAEQPRG) are disordered. The Cytoplasmic segment spans residues 1 to 37 (MFASRPAVHPVEAPPPPDPAEQPRGVLMKDLPGMPGT). The helical transmembrane segment at 38–58 (AGGLGLRLAQFAFAAVALAVM) threads the bilayer. Residues 59–69 (ASTNDFPSVTS) lie on the Extracellular side of the membrane. Residues 70–90 (FCFLVAAAILQCLWSFSLAIV) form a helical membrane-spanning segment. The Cytoplasmic portion of the chain corresponds to 91–105 (DIYALLVKRCLRNRR). A helical membrane pass occupies residues 106–126 (AVCLFAIGDGITAALTFSAAC). The Extracellular segment spans residues 127–152 (ASSGITVLIDNDLDLCSENHCASFES). A helical transmembrane segment spans residues 153–173 (ATAMAFLSWFALSPSFLLNFW). Residues 174–178 (SMASG) lie on the Cytoplasmic side of the membrane.

This sequence belongs to the Casparian strip membrane proteins (CASP) family. In terms of assembly, homodimer and heterodimers.

It localises to the cell membrane. The sequence is that of CASP-like protein 5A1 from Oryza sativa subsp. japonica (Rice).